The following is a 178-amino-acid chain: Female-specific protein transformer (178 aa).

Composition is skewed to basic and acidic residues over residues 1-18 (MKMD…DSHG) and 25-40 (RERE…DSKK). Positions 1–117 (MKMDADSSCG…RRYNPPPKII (117 aa)) are disordered. Basic residues-rich tracts occupy residues 59 to 73 (RRLR…RRSA) and 81 to 108 (RRHR…RSPR).

The protein localises to the nucleus speckle. Functionally, member of the regulatory pathway controlling female somatic sexual differentiation, regulated by Sxl. Activates dsx female-specific splicing by promoting the formation of a splicing enhancer complex which consists of tra, tra2 and sr proteins. The sequence is that of Female-specific protein transformer (tra) from Drosophila erecta (Fruit fly).